Here is a 223-residue protein sequence, read N- to C-terminus: Sigma non-opioid intracellular receptor 1 (223 aa).

Residues Met-1–Trp-9 are Lumenal-facing. Residues Pro-2 to Arg-8 form a targeting to endoplasmic reticulum-associated lipid droplets region. Residues Ala-10–Leu-30 form a helical membrane-spanning segment. Residues Gly-31–Ser-223 lie on the Cytoplasmic side of the membrane. The important for ligand-binding stretch occupies residues Ser-99 to Leu-106. The segment at Val-177–Ser-223 is C-terminal hydrophobic region.

It belongs to the ERG2 family. As to quaternary structure, homotrimer. Interacts with KCNA4. Interacts with KCNA2; cocaine consumption leads to increased interaction. Forms a ternary complex with ANK2 and ITPR3. The complex is disrupted by agonists. Interacts with RNF112 in an oxidative stress-regulated manner. Widely expressed with higher expression in liver, brain, kidney and thymus. Expressed throughout the brain with higher expression within cerebral cortex, hippocampus and cerebellum. Within the hippocampus expressed in cornu ammonis pyramidal neurons, the granular cells of the dentate gyrus as well as interneurons. Within the cerebellum, expressed in Purkinje cell bodies. Highly expressed in the brainstem and motor neurons of the spinal cord. Expressed by neural retina, retinal pigment epithelial cells and lens.

The protein resides in the nucleus inner membrane. It is found in the nucleus outer membrane. Its subcellular location is the nucleus envelope. It localises to the cytoplasmic vesicle. The protein localises to the endoplasmic reticulum membrane. The protein resides in the membrane. It is found in the lipid droplet. Its subcellular location is the cell junction. It localises to the cell membrane. The protein localises to the cell projection. The protein resides in the growth cone. It is found in the postsynaptic density membrane. Functions in lipid transport from the endoplasmic reticulum and is involved in a wide array of cellular functions probably through regulation of the biogenesis of lipid microdomains at the plasma membrane. Involved in the regulation of different receptors it plays a role in BDNF signaling and EGF signaling. Also regulates ion channels like the potassium channel and could modulate neurotransmitter release. Plays a role in calcium signaling through modulation together with ANK2 of the ITP3R-dependent calcium efflux at the endoplasmic reticulum. Plays a role in several other cell functions including proliferation, survival and death. Originally identified for its ability to bind various psychoactive drugs it is involved in learning processes, memory and mood alteration. Necessary for proper mitochondrial axonal transport in motor neurons, in particular the retrograde movement of mitochondria. Plays a role in protecting cells against oxidative stress-induced cell death via its interaction with RNF112. This Mus musculus (Mouse) protein is Sigma non-opioid intracellular receptor 1 (Sigmar1).